We begin with the raw amino-acid sequence, 885 residues long: DNA mismatch repair protein MutS (885 aa).

Gly626–Ser633 is a binding site for ATP.

Belongs to the DNA mismatch repair MutS family.

Functionally, this protein is involved in the repair of mismatches in DNA. It is possible that it carries out the mismatch recognition step. This protein has a weak ATPase activity. The sequence is that of DNA mismatch repair protein MutS from Burkholderia lata (strain ATCC 17760 / DSM 23089 / LMG 22485 / NCIMB 9086 / R18194 / 383).